Consider the following 238-residue polypeptide: Probable transcriptional regulatory protein M6_Spy0297 (238 aa).

The protein belongs to the TACO1 family. YeeN subfamily.

It is found in the cytoplasm. In Streptococcus pyogenes serotype M6 (strain ATCC BAA-946 / MGAS10394), this protein is Probable transcriptional regulatory protein M6_Spy0297.